A 736-amino-acid polypeptide reads, in one-letter code: MSAPEPKITPELIASHGLKPDEYQRILDLIGREPTFTELGIFSAMWNEHCSYKSSRIHLKGLPTKAPWVLQGPGENAGVIDIGDNQAVVFKMESHNHPSYIEPYQGATTGVGGILRDVFTMGARPIACLNALSFGDPSHPKTRHLVSGVVAGVGGYGNSFGVPTVGGQTRFHTRYDGNILVNAMAVGLADADKIFLAAASGVGMPIVYLGSKTGRDGMGGATMASAEFDEGSDEKRPTVQVGDPFAEKLLLEACLEIMAKDCVIAIQDMGAAGLTCSAVEMGAKGDLGVELDLDAVPTRETGMTAYEMMLSESQERMLMVLKPEKEKEAEEIFKKWGLDFAIVGYTTPTKRFVVKHGGQVKADLPIKELGDEAPLYDRPWVESERLPVIHARDINAPMGAAEALEKLLATPDLCSKRWVWEQYDHVIGGNTVQRPGGDAAVVRIEDGPKGLALTVDVTPRYCEADPFEGGKQAVAEAYRNITAVGGKPLAITDNLNFGNPERPEIMGQLVGCLKGISEACIALDSPIVSGNVSLYNETSGRGILPTPSIGGVGVLDDFTKSATLAFKAEGEAILLIGETKGWLGQSVYLREICGREEGAPPPVDLAVEKRHGDVVRGMIHAGTATAVHDVSDGGLLVAIAEMAIAGNIGASLDAPPGETVSHAWWFGEDQARYVVTVKEADLLAVKTKLKTIGVPCTQIGVTGGHALKIEGERTVDLKALRHAHEHWLPDYMGGKN.

H49 is a catalytic residue. Y52 and K91 together coordinate ATP. E93 contacts Mg(2+). Substrate is bound by residues 94–97 and R116; that span reads SHNH. The active-site Proton acceptor is the H95. D117 is a binding site for Mg(2+). Q240 serves as a coordination point for substrate. Position 268 (D268) interacts with Mg(2+). A substrate-binding site is contributed by 312 to 314; sequence ESQ. ATP-binding residues include D493 and G530. Mg(2+) is bound at residue N531. Residue S533 participates in substrate binding.

Belongs to the FGAMS family. Monomer. Part of the FGAM synthase complex composed of 1 PurL, 1 PurQ and 2 PurS subunits.

The protein resides in the cytoplasm. It catalyses the reaction N(2)-formyl-N(1)-(5-phospho-beta-D-ribosyl)glycinamide + L-glutamine + ATP + H2O = 2-formamido-N(1)-(5-O-phospho-beta-D-ribosyl)acetamidine + L-glutamate + ADP + phosphate + H(+). It participates in purine metabolism; IMP biosynthesis via de novo pathway; 5-amino-1-(5-phospho-D-ribosyl)imidazole from N(2)-formyl-N(1)-(5-phospho-D-ribosyl)glycinamide: step 1/2. Part of the phosphoribosylformylglycinamidine synthase complex involved in the purines biosynthetic pathway. Catalyzes the ATP-dependent conversion of formylglycinamide ribonucleotide (FGAR) and glutamine to yield formylglycinamidine ribonucleotide (FGAM) and glutamate. The FGAM synthase complex is composed of three subunits. PurQ produces an ammonia molecule by converting glutamine to glutamate. PurL transfers the ammonia molecule to FGAR to form FGAM in an ATP-dependent manner. PurS interacts with PurQ and PurL and is thought to assist in the transfer of the ammonia molecule from PurQ to PurL. The chain is Phosphoribosylformylglycinamidine synthase subunit PurL from Rhodopseudomonas palustris (strain ATCC BAA-98 / CGA009).